Here is a 402-residue protein sequence, read N- to C-terminus: Glutamyl-tRNA reductase (402 aa).

Substrate contacts are provided by residues T48–R51, S91, E96–Q98, and Q102. C49 serves as the catalytic Nucleophile. Residue G171–G176 coordinates NADP(+).

It belongs to the glutamyl-tRNA reductase family. Homodimer.

It carries out the reaction (S)-4-amino-5-oxopentanoate + tRNA(Glu) + NADP(+) = L-glutamyl-tRNA(Glu) + NADPH + H(+). It participates in porphyrin-containing compound metabolism; protoporphyrin-IX biosynthesis; 5-aminolevulinate from L-glutamyl-tRNA(Glu): step 1/2. In terms of biological role, catalyzes the NADPH-dependent reduction of glutamyl-tRNA(Glu) to glutamate 1-semialdehyde (GSA). The sequence is that of Glutamyl-tRNA reductase from Methanothermobacter thermautotrophicus (strain ATCC 29096 / DSM 1053 / JCM 10044 / NBRC 100330 / Delta H) (Methanobacterium thermoautotrophicum).